A 219-amino-acid chain; its full sequence is Ribosomal RNA small subunit methyltransferase G (219 aa).

S-adenosyl-L-methionine-binding positions include G85, L90, 136-137 (VE), and R151.

The protein belongs to the methyltransferase superfamily. RNA methyltransferase RsmG family.

Its subcellular location is the cytoplasm. It catalyses the reaction guanosine(527) in 16S rRNA + S-adenosyl-L-methionine = N(7)-methylguanosine(527) in 16S rRNA + S-adenosyl-L-homocysteine. In terms of biological role, specifically methylates the N7 position of guanine in position 527 of 16S rRNA. This chain is Ribosomal RNA small subunit methyltransferase G, found in Cellvibrio japonicus (strain Ueda107) (Pseudomonas fluorescens subsp. cellulosa).